We begin with the raw amino-acid sequence, 337 residues long: Holliday junction branch migration complex subunit RuvB (337 aa).

Residues 4–186 are large ATPase domain (RuvB-L); that stretch reads ADRLIHPQII…FGIPLRLEFY (183 aa). Residues Arg26, Gly67, Lys70, Thr71, Thr72, 133–135, Arg176, Tyr186, and Arg223 each bind ATP; that span reads EDY. Thr71 contributes to the Mg(2+) binding site. A small ATPAse domain (RuvB-S) region spans residues 187-257; that stretch reads NVKDLSSIVA…IAEAALDMLD (71 aa). A head domain (RuvB-H) region spans residues 260 to 337; the sequence is AEGFDYMDRK…NHFNIIKPDA (78 aa). 3 residues coordinate DNA: Arg296, Arg315, and Arg320.

It belongs to the RuvB family. As to quaternary structure, homohexamer. Forms an RuvA(8)-RuvB(12)-Holliday junction (HJ) complex. HJ DNA is sandwiched between 2 RuvA tetramers; dsDNA enters through RuvA and exits via RuvB. An RuvB hexamer assembles on each DNA strand where it exits the tetramer. Each RuvB hexamer is contacted by two RuvA subunits (via domain III) on 2 adjacent RuvB subunits; this complex drives branch migration. In the full resolvosome a probable DNA-RuvA(4)-RuvB(12)-RuvC(2) complex forms which resolves the HJ.

It localises to the cytoplasm. It catalyses the reaction ATP + H2O = ADP + phosphate + H(+). Its function is as follows. The RuvA-RuvB-RuvC complex processes Holliday junction (HJ) DNA during genetic recombination and DNA repair, while the RuvA-RuvB complex plays an important role in the rescue of blocked DNA replication forks via replication fork reversal (RFR). RuvA specifically binds to HJ cruciform DNA, conferring on it an open structure. The RuvB hexamer acts as an ATP-dependent pump, pulling dsDNA into and through the RuvAB complex. RuvB forms 2 homohexamers on either side of HJ DNA bound by 1 or 2 RuvA tetramers; 4 subunits per hexamer contact DNA at a time. Coordinated motions by a converter formed by DNA-disengaged RuvB subunits stimulates ATP hydrolysis and nucleotide exchange. Immobilization of the converter enables RuvB to convert the ATP-contained energy into a lever motion, pulling 2 nucleotides of DNA out of the RuvA tetramer per ATP hydrolyzed, thus driving DNA branch migration. The RuvB motors rotate together with the DNA substrate, which together with the progressing nucleotide cycle form the mechanistic basis for DNA recombination by continuous HJ branch migration. Branch migration allows RuvC to scan DNA until it finds its consensus sequence, where it cleaves and resolves cruciform DNA. This Shewanella halifaxensis (strain HAW-EB4) protein is Holliday junction branch migration complex subunit RuvB.